The following is a 457-amino-acid chain: C4-dicarboxylate transport protein (457 aa).

Transmembrane regions (helical) follow at residues 22 to 42 (FQVV…PAFA), 55 to 75 (LVKM…IAGM), 90 to 110 (VYFL…AHVV), 138 to 158 (LTLV…AFTG), 168 to 188 (GPNI…LALV), 209 to 229 (LVHI…AFTI), 242 to 262 (WLVG…LGVV), 335 to 357 (LFIA…LAVA), and 376 to 396 (AATL…ILGV).

It belongs to the dicarboxylate/amino acid:cation symporter (DAACS) (TC 2.A.23) family.

Its subcellular location is the cell inner membrane. Functionally, responsible for the transport of dicarboxylates such as succinate, fumarate, and malate from the periplasm across the membrane. The protein is C4-dicarboxylate transport protein of Xanthomonas oryzae pv. oryzae (strain MAFF 311018).